Here is a 130-residue protein sequence, read N- to C-terminus: MEAQTLYATGKRKTAIARTWMKPGSGKITVNGKDADAHFTTNAARIIMRESLKITETLESYDVDIRVIGGGITGQAGAARHGISKILAGLDPEMRQKLKANGFLTRDARVKERKKYGQRGARARYQFSKR.

Belongs to the universal ribosomal protein uS9 family.

The sequence is that of Small ribosomal subunit protein uS9 from Desulfosudis oleivorans (strain DSM 6200 / JCM 39069 / Hxd3) (Desulfococcus oleovorans).